Consider the following 64-residue polypeptide: Conotoxin mr5.3 (64 aa).

Positions 1-19 are cleaved as a signal peptide; sequence MRCVPVFVILLLLIASVPS. A propeptide spanning residues 20–48 is cleaved from the precursor; sequence VDAQLKTKDDMPLASSHANVKRTLQILRN. A 4-carboxyglutamate mark is found at Glu56 and Glu60.

Post-translationally, contains 2 disulfide bonds that can be either 'C1-C3, C2-C4' or 'C1-C4, C2-C3', since these disulfide connectivities have been observed for conotoxins with cysteine framework V (for examples, see AC P0DQQ7 and AC P81755). As to expression, expressed by the venom duct.

It localises to the secreted. The sequence is that of Conotoxin mr5.3 from Conus marmoreus (Marble cone).